Here is a 437-residue protein sequence, read N- to C-terminus: Xylose isomerase (437 aa).

Active-site residues include His-102 and Asp-105. 7 residues coordinate Mg(2+): Glu-233, Glu-269, His-272, Asp-297, Asp-308, Asp-310, and Asp-340.

It belongs to the xylose isomerase family. Homotetramer. It depends on Mg(2+) as a cofactor.

Its subcellular location is the cytoplasm. It carries out the reaction alpha-D-xylose = alpha-D-xylulofuranose. This is Xylose isomerase from Novosphingobium aromaticivorans (strain ATCC 700278 / DSM 12444 / CCUG 56034 / CIP 105152 / NBRC 16084 / F199).